Consider the following 716-residue polypeptide: tRNA(Met) cytidine acetyltransferase TmcA (716 aa).

ATP contacts are provided by residues glutamine 192, 217–226 (GRGKSYVIGL), and arginine 364. The N-acetyltransferase domain maps to 401–567 (REVLARDREV…KNVALAKPLD (167 aa)). Residues 493–495 (IAV) and 500–506 (QRRGLGS) each bind acetyl-CoA.

This sequence belongs to the RNA cytidine acetyltransferase family. TmcA subfamily.

Its subcellular location is the cytoplasm. The enzyme catalyses cytidine(34) in elongator tRNA(Met) + acetyl-CoA + ATP + H2O = N(4)-acetylcytidine(34) in elongator tRNA(Met) + ADP + phosphate + CoA + H(+). In terms of biological role, catalyzes the formation of N(4)-acetylcytidine (ac(4)C) at the wobble position of tRNA(Met), by using acetyl-CoA as an acetyl donor and ATP (or GTP). The protein is tRNA(Met) cytidine acetyltransferase TmcA of Aeropyrum pernix (strain ATCC 700893 / DSM 11879 / JCM 9820 / NBRC 100138 / K1).